Here is a 394-residue protein sequence, read N- to C-terminus: Actin-related protein 2-A (394 aa).

ATP is bound by residues 160–162 (GDG), 214–218 (RMIKE), and 305–310 (GGSTMY).

This sequence belongs to the actin family. ARP2 subfamily. In terms of assembly, component of the Arp2/3 complex composed of actr2/arp2, actr3/arp3, arpc1 (arpc1a or arpc1b), arpc2, arpc3, arpc4 and arpc5.

It localises to the cytoplasm. Its subcellular location is the cytoskeleton. The protein resides in the cell projection. The protein localises to the nucleus. Its function is as follows. ATP-binding component of the Arp2/3 complex, a multiprotein complex that mediates actin polymerization upon stimulation by nucleation-promoting factor (NPF). The Arp2/3 complex mediates the formation of branched actin networks in the cytoplasm, providing the force for cell motility. Seems to contact the pointed end of the daughter actin filament. In addition to its role in the cytoplasmic cytoskeleton, the Arp2/3 complex also promotes actin polymerization in the nucleus, thereby regulating gene transcription and repair of damaged DNA. The Arp2/3 complex promotes homologous recombination (HR) repair in response to DNA damage by promoting nuclear actin polymerization, leading to drive motility of double-strand breaks (DSBs). This is Actin-related protein 2-A (actr2-a) from Xenopus laevis (African clawed frog).